A 396-amino-acid chain; its full sequence is MSESVHTNTSLWSKGMKAVIVAQFLSAFGDNALLFATLALLKAQFYPEWSQPILQMVFVGAYILLAPFVGQVADSFAKGRVMMFANGLKLLGAASICFGINPFLGYTLVGVGAAAYSPAKYGILGELTTGSKLVKANGLMEASAIAAILLGSVAGGVLADWHVLVALAACALAYGGAVVANIYIPKLAARPGQSWNLINMTRSFLNACTSLWCNGETRFSLVGASLFWGAGVTLRFLLVLWVPVALGITDNATPTYLNAMVAIGIVVGAGAAAKLVTLETVSRCMPAGILIGVVVLIFSLQHELLPAYALLMLIGVLGGFFVVPLNALLQERGKKSVGAGNAIAVQNLGENSAMLLMLGIYSLAVMVGIPVVPIGIGFGALFALAITALWIWQRRH.

Residues Met1–Lys17 are Periplasmic-facing. The helical transmembrane segment at Ala18 to Leu38 threads the bilayer. The Cytoplasmic segment spans residues Ala39–Pro52. Residues Ile53–Ala73 traverse the membrane as a helical segment. Residues Asp74 to Leu90 lie on the Periplasmic side of the membrane. Residues Leu91–Val111 traverse the membrane as a helical segment. Residues Gly112–Ala144 are Cytoplasmic-facing. Residues Ile145–Val165 form a helical membrane-spanning segment. Residue Ala166 is a topological domain, periplasmic. Residues Leu167–Leu187 form a helical membrane-spanning segment. The Cytoplasmic segment spans residues Ala188 to Ser225. A helical membrane pass occupies residues Leu226–Leu246. The Periplasmic segment spans residues Gly247–Thr255. A helical membrane pass occupies residues Tyr256–Val276. Residues Thr277–Glu279 are Cytoplasmic-facing. A helical transmembrane segment spans residues Thr280 to Leu300. The Periplasmic portion of the chain corresponds to Gln301–Glu303. The chain crosses the membrane as a helical span at residues Leu304–Pro324. Over Leu325–Ala342 the chain is Cytoplasmic. Residues Ile343–Leu363 form a helical membrane-spanning segment. The Periplasmic segment spans residues Ala364 to Val365. A helical membrane pass occupies residues Met366 to Ile386. Topologically, residues Thr387–His396 are cytoplasmic.

Belongs to the major facilitator superfamily. LplT (TC 2.A.1.42) family.

The protein localises to the cell inner membrane. In terms of biological role, catalyzes the facilitated diffusion of 2-acyl-glycero-3-phosphoethanolamine (2-acyl-GPE) into the cell. The chain is Lysophospholipid transporter LplT from Shigella flexneri serotype 5b (strain 8401).